The chain runs to 431 residues: Protein farnesyltransferase subunit beta (431 aa).

PFTB repeat units follow at residues 130–171, 182–224, 231–273, 280–322, and 332–375; these read KRKI…SLCD, RKGI…TLLN, TEGV…AILR, VEKL…AILE, and KHAL…AVAE. (2E,6E)-farnesyl diphosphate is bound by residues 258–261 and 301–304; these read HGGY and RSNK. Zn(2+)-binding residues include aspartate 307 and cysteine 309. 310 to 313 contacts (2E,6E)-farnesyl diphosphate; the sequence is YSFW. Position 363 (histidine 363) interacts with Zn(2+).

It belongs to the protein prenyltransferase subunit beta family. As to quaternary structure, heterodimer of an alpha (RAM2) and a beta (RAM1) subunit. The cofactor is Zn(2+).

The protein localises to the cytoplasm. The catalysed reaction is L-cysteinyl-[protein] + (2E,6E)-farnesyl diphosphate = S-(2E,6E)-farnesyl-L-cysteinyl-[protein] + diphosphate. Catalyzes the transfer of a farnesyl moiety from farnesyl diphosphate to a cysteine at the fourth position from the C-terminus of several proteins having the C-terminal sequence Cys-aliphatic-aliphatic-X where X is Ser, Ala, Met, Cys, or Gln. Required for the membrane localization of proteins such as a-factor, Ras proteins and other membrane proteins containing the C-terminal CAAX motif. The beta subunit is responsible for isoprenoid and peptide-binding. This is Protein farnesyltransferase subunit beta from Saccharomyces cerevisiae (strain ATCC 204508 / S288c) (Baker's yeast).